We begin with the raw amino-acid sequence, 491 residues long: Protein nucleotidyltransferase YdiU (491 aa).

ATP contacts are provided by glycine 94, glycine 96, arginine 97, lysine 117, aspartate 129, glycine 130, arginine 180, and arginine 187. The active-site Proton acceptor is the aspartate 256. Mg(2+) is bound by residues asparagine 257 and aspartate 266. Aspartate 266 lines the ATP pocket.

The protein belongs to the SELO family. Mg(2+) serves as cofactor. Mn(2+) is required as a cofactor.

The enzyme catalyses L-seryl-[protein] + ATP = 3-O-(5'-adenylyl)-L-seryl-[protein] + diphosphate. The catalysed reaction is L-threonyl-[protein] + ATP = 3-O-(5'-adenylyl)-L-threonyl-[protein] + diphosphate. It carries out the reaction L-tyrosyl-[protein] + ATP = O-(5'-adenylyl)-L-tyrosyl-[protein] + diphosphate. It catalyses the reaction L-histidyl-[protein] + UTP = N(tele)-(5'-uridylyl)-L-histidyl-[protein] + diphosphate. The enzyme catalyses L-seryl-[protein] + UTP = O-(5'-uridylyl)-L-seryl-[protein] + diphosphate. The catalysed reaction is L-tyrosyl-[protein] + UTP = O-(5'-uridylyl)-L-tyrosyl-[protein] + diphosphate. Functionally, nucleotidyltransferase involved in the post-translational modification of proteins. It can catalyze the addition of adenosine monophosphate (AMP) or uridine monophosphate (UMP) to a protein, resulting in modifications known as AMPylation and UMPylation. This is Protein nucleotidyltransferase YdiU from Brevibacillus brevis (strain 47 / JCM 6285 / NBRC 100599).